A 125-amino-acid polypeptide reads, in one-letter code: MELFQTADWKKEKHVPVIEVLRAEGGVVEVKVSVGKEIPHPNTTEHHIAWIELVFQPEGSKFPYVVGRAEFAAHGASVDGPNTSGVYTDPVAVFAFKAEKSGKLTAFSYCNIHGLWMGEATLSLE.

The Fe cation site is built by glutamate 12, histidine 14, histidine 40, histidine 46, cysteine 110, and histidine 113.

This sequence belongs to the desulfoferrodoxin family. Fe cation serves as cofactor.

The enzyme catalyses reduced [rubredoxin] + superoxide + 2 H(+) = oxidized [rubredoxin] + H2O2. In terms of biological role, uses electrons from reduced NADP, by way of rubredoxin and an oxidoreductase, to catalyze the reduction of superoxide to hydrogen peroxide. This chain is Putative superoxide reductase, found in Archaeoglobus fulgidus (strain ATCC 49558 / DSM 4304 / JCM 9628 / NBRC 100126 / VC-16).